The sequence spans 496 residues: Cytochrome f, chloroplastic (496 aa).

Residues 1–149 (MASLQTPVMV…VGAAAGSANA (149 aa)) constitute a chloroplast transit peptide. The heme site is built by Y150, C170, C173, and H174. Residues 462-481 (VQAFLFFSFTVLATQTLLVV) traverse the membrane as a helical segment.

Belongs to the cytochrome f family. Interacts with plastocyanin and Rieske iron-sulfur protein. Heme serves as cofactor.

It localises to the plastid. It is found in the chloroplast thylakoid membrane. Functionally, translocates protons across the thylakoid membrane and transfers electrons from photosystem II to photosystem I. It receives electrons from the Rieske iron-sulfur protein and passes them to plastocyanin. This chain is Cytochrome f, chloroplastic (petA), found in Euglena gracilis.